Consider the following 264-residue polypeptide: Exosome complex component Rrp4 (264 aa).

The 73-residue stretch at 65–137 folds into the S1 motif domain; sequence GDNVLGKIVD…EVNNIELTTK (73 aa). One can recognise a KH domain in the interval 147-206; sequence RGGQIIKITSSKVPRVIGKGGSMINMIKKLTQSRIIVGQNGWIWISSKNPELEKLAIEAI. The segment covering 244–258 has biased composition (acidic residues); that stretch reads SLEEETQEETVMEND. Positions 244 to 264 are disordered; the sequence is SLEEETQEETVMENDVEARGP.

Belongs to the RRP4 family. As to quaternary structure, component of the archaeal exosome complex. Forms a trimer of Rrp4 and/or Csl4 subunits. The trimer associates with a hexameric ring-like arrangement composed of 3 Rrp41-Rrp42 heterodimers.

The protein resides in the cytoplasm. Non-catalytic component of the exosome, which is a complex involved in RNA degradation. Increases the RNA binding and the efficiency of RNA degradation. Confers strong poly(A) specificity to the exosome. This chain is Exosome complex component Rrp4, found in Pyrococcus furiosus (strain ATCC 43587 / DSM 3638 / JCM 8422 / Vc1).